Consider the following 284-residue polypeptide: Cysteine-rich repeat secretory protein 8 (284 aa).

Residues 1–27 (MATFIRFTAPLFCFFFLFSLFSHQTMS) form the signal peptide. Gnk2-homologous domains lie at 32–136 (MATF…NVSF) and 151–259 (SLAT…TTGL).

This sequence belongs to the cysteine-rich repeat secretory protein family.

Its subcellular location is the secreted. This is Cysteine-rich repeat secretory protein 8 (CRRSP8) from Arabidopsis thaliana (Mouse-ear cress).